The sequence spans 348 residues: Cuticle collagen rol-6 (348 aa).

The segment at 76–348 (GYGATGVQPP…SARRHRKFQL (273 aa)) is disordered. Positions 120–137 (PGGGFPDGPFPNGGGPRG) are enriched in gly residues. 4 triple-helical region regions span residues 152-178 (GPAGPEGEEGPDGHDGQDGVPGFDGKD), 196-258 (GPLG…DGER), 261-284 (GRPGPRGPPGEAGPEGPQGPTGRD), and 288-323 (GQSGPQGEPGLQGYGGAAGEDGPEGPPGAPGLPGKD). A compositionally biased stretch (low complexity) spans 194–231 (PQGPLGPQGPNGAPGLRGMRGARGQPGRPGRDGNPGMP). Residues 297–306 (GLQGYGGAAG) are compositionally biased toward gly residues. Residues 322-338 (KDAEYCKCPGREGDAGR) show a composition bias toward basic and acidic residues. Basic residues predominate over residues 339 to 348 (SARRHRKFQL).

This sequence belongs to the cuticular collagen family. Collagen polypeptide chains are complexed within the cuticle by disulfide bonds and other types of covalent cross-links. Localizes in stripes along the alae.

In terms of biological role, nematode cuticles are composed largely of collagen-like proteins. The cuticle functions both as an exoskeleton and as a barrier to protect the worm from its environment. May play a role in cuticle remodeling in response to the environment. Involved in body morphogenesis. This chain is Cuticle collagen rol-6 (rol-6), found in Caenorhabditis elegans.